We begin with the raw amino-acid sequence, 190 residues long: Potassium-transporting ATPase KdpC subunit (190 aa).

The chain crosses the membrane as a helical span at residues 13–33 (VGFLLLTLMCGVVYPGIVTIF).

The protein belongs to the KdpC family. In terms of assembly, the system is composed of three essential subunits: KdpA, KdpB and KdpC.

It localises to the cell membrane. Functionally, part of the high-affinity ATP-driven potassium transport (or Kdp) system, which catalyzes the hydrolysis of ATP coupled with the electrogenic transport of potassium into the cytoplasm. This subunit acts as a catalytic chaperone that increases the ATP-binding affinity of the ATP-hydrolyzing subunit KdpB by the formation of a transient KdpB/KdpC/ATP ternary complex. The chain is Potassium-transporting ATPase KdpC subunit from Listeria monocytogenes serotype 4b (strain CLIP80459).